A 209-amino-acid chain; its full sequence is Imidazole glycerol phosphate synthase subunit HisH (209 aa).

Residues 1-205 (MIAIIDYGMG…QGVVEAWKSS (205 aa)) form the Glutamine amidotransferase type-1 domain. Catalysis depends on Cys79, which acts as the Nucleophile. Catalysis depends on residues His180 and Glu182.

As to quaternary structure, heterodimer of HisH and HisF.

The protein resides in the cytoplasm. The enzyme catalyses 5-[(5-phospho-1-deoxy-D-ribulos-1-ylimino)methylamino]-1-(5-phospho-beta-D-ribosyl)imidazole-4-carboxamide + L-glutamine = D-erythro-1-(imidazol-4-yl)glycerol 3-phosphate + 5-amino-1-(5-phospho-beta-D-ribosyl)imidazole-4-carboxamide + L-glutamate + H(+). It catalyses the reaction L-glutamine + H2O = L-glutamate + NH4(+). The protein operates within amino-acid biosynthesis; L-histidine biosynthesis; L-histidine from 5-phospho-alpha-D-ribose 1-diphosphate: step 5/9. IGPS catalyzes the conversion of PRFAR and glutamine to IGP, AICAR and glutamate. The HisH subunit catalyzes the hydrolysis of glutamine to glutamate and ammonia as part of the synthesis of IGP and AICAR. The resulting ammonia molecule is channeled to the active site of HisF. In Bacillus cereus (strain ATCC 14579 / DSM 31 / CCUG 7414 / JCM 2152 / NBRC 15305 / NCIMB 9373 / NCTC 2599 / NRRL B-3711), this protein is Imidazole glycerol phosphate synthase subunit HisH.